The chain runs to 60 residues: GEQLCRLRAEFQASRYLTEERRTALARELRLNEAQIKIWFQNKRAKIKKASGVKNALALY.

Residues 1–41 (GEQLCRLRAEFQASRYLTEERRTALARELRLNEAQIKIWFQ) constitute a DNA-binding region (homeobox).

The protein belongs to the engrailed homeobox family.

The protein resides in the nucleus. The polypeptide is Homeobox protein engrailed-like (Lampetra planeri (Brook lamprey)).